A 191-amino-acid chain; its full sequence is uncharacterized protein (191 aa).

The HTH tetR-type domain maps to 6-66 (GLTQKMIVDA…ELAVRGLTKL (61 aa)). A DNA-binding region (H-T-H motif) is located at residues 29 to 48 (SLAALSKKMNVRPPSLYNHI).

This is an uncharacterized protein from Bacillus subtilis (strain 168).